Consider the following 369-residue polypeptide: Pyrimidine monooxygenase RutA (369 aa).

Residues 49-50 (IK), Asn115, Glu124, 140-141 (RY), and Ser190 each bind FMN.

The protein belongs to the NtaA/SnaA/DszA monooxygenase family. RutA subfamily.

The enzyme catalyses uracil + FMNH2 + NADH + O2 = (Z)-3-ureidoacrylate + FMN + NAD(+) + H2O + H(+). The catalysed reaction is thymine + FMNH2 + NADH + O2 = (Z)-2-methylureidoacrylate + FMN + NAD(+) + H2O + H(+). In terms of biological role, catalyzes the pyrimidine ring opening between N-3 and C-4 by an unusual flavin hydroperoxide-catalyzed mechanism, adding oxygen atoms in the process to yield ureidoacrylate peracid, that immediately reacts with FMN forming ureidoacrylate and FMN-N(5)-oxide. The FMN-N(5)-oxide reacts spontaneously with NADH to produce FMN. Requires the flavin reductase RutF to regenerate FMN in vivo. The polypeptide is Pyrimidine monooxygenase RutA (Acinetobacter baylyi (strain ATCC 33305 / BD413 / ADP1)).